The primary structure comprises 245 residues: Galectin-3 (245 aa).

The segment at 1–30 is disordered; the sequence is MADGFSLNDALAGSGNPNPQGWPGAWGNQP. At Ala-2 the chain carries N-acetylalanine. Ser-6 bears the Phosphoserine; by CK1 mark. A run of 4 repeats spans residues 35-43, 44-52, 53-61, and 62-70. Residues 35 to 99 are 7 X 9 AA tandem repeats of Y-P-G-X(3)-P-[GS]-A; sequence YPGASYPGAY…PSAPGAYPAA (65 aa). The tract at residues 47 to 68 is disordered; it reads QAPPGAYPGQAPPGAYPGPTAP. The stretch at 71–78 is one 5; approximate repeat; that stretch reads YPGPAPGA. Residues 79-88 form a 6; approximate repeat; sequence YPGQPGASGA. The stretch at 89-99 is one 7; approximate repeat; it reads YPSAPGAYPAA. One can recognise a Galectin domain in the interval 113 to 243; that stretch reads YKLPLAGGVM…DITLTSAAPT (131 aa). Residue 176–182 coordinates a beta-D-galactoside; it reads WGREERQ. A Phosphoserine modification is found at Ser-183. The short motif at 221–236 is the Nuclear export signal element; that stretch reads KNLREINQMEISGDIT.

As to quaternary structure, probably forms homo- or heterodimers. Interacts with DMBT1. Interacts with CD6 and ALCAM. Forms a complex with the ITGA3, ITGB1 and CSPG4. Interacts with LGALS3BP, LYPD3, ZFTRAF1 and UACA. Interacts with TRIM16; this interaction mediates autophagy of damage endomembranes. Interacts with cargo receptor TMED10; the interaction mediates the translocation from the cytoplasm into the ERGIC (endoplasmic reticulum-Golgi intermediate compartment) and thereby secretion. Interacts with and inhibits by binding NCR3/NKp30.

The protein localises to the cytoplasm. It localises to the nucleus. Its subcellular location is the secreted. Galactose-specific lectin which binds IgE. May mediate with the alpha-3, beta-1 integrin the stimulation by CSPG4 of endothelial cells migration. Together with DMBT1, required for terminal differentiation of columnar epithelial cells during early embryogenesis. In the nucleus: acts as a pre-mRNA splicing factor. Involved in acute inflammatory responses including neutrophil activation and adhesion, chemoattraction of monocytes macrophages, opsonization of apoptotic neutrophils, and activation of mast cells. Together with TRIM16, coordinates the recognition of membrane damage with mobilization of the core autophagy regulators ATG16L1 and BECN1 in response to damaged endomembranes. When secreted, interacts with NK cell-activating receptor NCR3/NKp30 acting as an inhibitory ligand which antagonizes NK cell attack. The protein is Galectin-3 (LGALS3) of Cricetulus longicaudatus (Long-tailed dwarf hamster).